Here is a 360-residue protein sequence, read N- to C-terminus: NAD(P)H-quinone oxidoreductase subunit 1, chloroplastic (360 aa).

The next 9 membrane-spanning stretches (helical) occupy residues 27–47, 98–118, 129–149, 165–185, 203–223, 248–268, 269–289, 297–317, and 340–360; these read IWIFVPIFSLVLGIITGVLVI, FSIGPSIAVISILLSYSVIPF, IGIFLWIAISSIAPIGLLMSG, AAQSISYEIPLTLCVLSISLL, FWGWNLWRQPIGFIIFLISSL, YSGIKFGLFYVASYLNLLISS, LFVTVLYLGGWNISIPYISIL, IFGTTIGIFITLAKTYLFLFI, and FLLPISLGNLLLTTSFQLFSL.

The protein belongs to the complex I subunit 1 family. As to quaternary structure, NDH is composed of at least 16 different subunits, 5 of which are encoded in the nucleus.

It is found in the plastid. The protein resides in the chloroplast thylakoid membrane. The enzyme catalyses a plastoquinone + NADH + (n+1) H(+)(in) = a plastoquinol + NAD(+) + n H(+)(out). It catalyses the reaction a plastoquinone + NADPH + (n+1) H(+)(in) = a plastoquinol + NADP(+) + n H(+)(out). Functionally, NDH shuttles electrons from NAD(P)H:plastoquinone, via FMN and iron-sulfur (Fe-S) centers, to quinones in the photosynthetic chain and possibly in a chloroplast respiratory chain. The immediate electron acceptor for the enzyme in this species is believed to be plastoquinone. Couples the redox reaction to proton translocation, and thus conserves the redox energy in a proton gradient. The chain is NAD(P)H-quinone oxidoreductase subunit 1, chloroplastic from Nasturtium officinale (Watercress).